Here is a 262-residue protein sequence, read N- to C-terminus: Tropinone reductase homolog At2g29290 (262 aa).

Residue 13-37 (LVTGGTKGIGEAVVEELSILGARVH) coordinates NADP(+). S146 lines the substrate pocket. Y159 (proton acceptor) is an active-site residue.

It belongs to the short-chain dehydrogenases/reductases (SDR) family. SDR65C subfamily.

In Arabidopsis thaliana (Mouse-ear cress), this protein is Tropinone reductase homolog At2g29290.